We begin with the raw amino-acid sequence, 210 residues long: N-(5'-phosphoribosyl)anthranilate isomerase (210 aa).

This sequence belongs to the TrpF family.

It carries out the reaction N-(5-phospho-beta-D-ribosyl)anthranilate = 1-(2-carboxyphenylamino)-1-deoxy-D-ribulose 5-phosphate. It participates in amino-acid biosynthesis; L-tryptophan biosynthesis; L-tryptophan from chorismate: step 3/5. The polypeptide is N-(5'-phosphoribosyl)anthranilate isomerase (Crocosphaera subtropica (strain ATCC 51142 / BH68) (Cyanothece sp. (strain ATCC 51142))).